The chain runs to 282 residues: NADPH-dependent 7-cyano-7-deazaguanine reductase (282 aa).

Residue 88–90 (IES) coordinates substrate. 90-91 (SK) contributes to the NADPH binding site. Residue Cys190 is the Thioimide intermediate of the active site. Asp197 functions as the Proton donor in the catalytic mechanism. 229-230 (HE) is a substrate binding site. 258 to 259 (RG) contributes to the NADPH binding site.

The protein belongs to the GTP cyclohydrolase I family. QueF type 2 subfamily. Homodimer.

It is found in the cytoplasm. The catalysed reaction is 7-aminomethyl-7-carbaguanine + 2 NADP(+) = 7-cyano-7-deazaguanine + 2 NADPH + 3 H(+). Its pathway is tRNA modification; tRNA-queuosine biosynthesis. In terms of biological role, catalyzes the NADPH-dependent reduction of 7-cyano-7-deazaguanine (preQ0) to 7-aminomethyl-7-deazaguanine (preQ1). The protein is NADPH-dependent 7-cyano-7-deazaguanine reductase of Escherichia coli O17:K52:H18 (strain UMN026 / ExPEC).